A 245-amino-acid chain; its full sequence is tRNA1(Val) (adenine(37)-N6)-methyltransferase (245 aa).

Belongs to the methyltransferase superfamily. tRNA (adenine-N(6)-)-methyltransferase family.

It is found in the cytoplasm. It carries out the reaction adenosine(37) in tRNA1(Val) + S-adenosyl-L-methionine = N(6)-methyladenosine(37) in tRNA1(Val) + S-adenosyl-L-homocysteine + H(+). In terms of biological role, specifically methylates the adenine in position 37 of tRNA(1)(Val) (anticodon cmo5UAC). The polypeptide is tRNA1(Val) (adenine(37)-N6)-methyltransferase (Salmonella paratyphi C (strain RKS4594)).